We begin with the raw amino-acid sequence, 205 residues long: Glycerol-3-phosphate acyltransferase (205 aa).

Helical transmembrane passes span 8 to 28 (IALF…GYLA), 57 to 77 (TPAL…ILIA), 84 to 104 (ESLQ…PVWL), 118 to 138 (VFLG…LLIL), 143 to 163 (IVSL…LINS), and 164 to 184 (KETF…LVLW).

The protein belongs to the PlsY family. Probably interacts with PlsX.

The protein localises to the cell inner membrane. It catalyses the reaction an acyl phosphate + sn-glycerol 3-phosphate = a 1-acyl-sn-glycero-3-phosphate + phosphate. The protein operates within lipid metabolism; phospholipid metabolism. Its function is as follows. Catalyzes the transfer of an acyl group from acyl-phosphate (acyl-PO(4)) to glycerol-3-phosphate (G3P) to form lysophosphatidic acid (LPA). This enzyme utilizes acyl-phosphate as fatty acyl donor, but not acyl-CoA or acyl-ACP. The sequence is that of Glycerol-3-phosphate acyltransferase from Prochlorococcus marinus (strain SARG / CCMP1375 / SS120).